A 159-amino-acid polypeptide reads, in one-letter code: 16 kDa outer membrane lipoprotein (159 aa).

Positions 1–21 (MNKKIFTLFLVVAASAIFAVS) are cleaved as a signal peptide. A lipid anchor (N-palmitoyl cysteine) is attached at C22. Residue C22 is the site of S-diacylglycerol cysteine attachment.

The protein localises to the cell outer membrane. The sequence is that of 16 kDa outer membrane lipoprotein (smpA) from Brachyspira hyodysenteriae (Treponema hyodysenteriae).